The following is a 540-amino-acid chain: Methionine--tRNA ligase 1 (540 aa).

The 'HIGH' region motif lies at P10–H20. Zn(2+) contacts are provided by C141, C144, C153, and C156. A 'KMSKS' region motif is present at residues K327 to S331. T330 provides a ligand contact to ATP.

This sequence belongs to the class-I aminoacyl-tRNA synthetase family. MetG type 1 subfamily. As to quaternary structure, monomer. Requires Zn(2+) as cofactor.

It is found in the cytoplasm. The catalysed reaction is tRNA(Met) + L-methionine + ATP = L-methionyl-tRNA(Met) + AMP + diphosphate. In terms of biological role, is required not only for elongation of protein synthesis but also for the initiation of all mRNA translation through initiator tRNA(fMet) aminoacylation. This Alkaliphilus oremlandii (strain OhILAs) (Clostridium oremlandii (strain OhILAs)) protein is Methionine--tRNA ligase 1.